The chain runs to 636 residues: Threonine--tRNA ligase (636 aa).

A TGS domain is found at 1–61 (MINITLPDDS…RNDCAVRLIT (61 aa)). The interval 238–528 (DHRKIGTRMG…LVEHFAGKFP (291 aa)) is catalytic. Positions 329, 380, and 505 each coordinate Zn(2+).

Belongs to the class-II aminoacyl-tRNA synthetase family. As to quaternary structure, homodimer. The cofactor is Zn(2+).

It localises to the cytoplasm. It catalyses the reaction tRNA(Thr) + L-threonine + ATP = L-threonyl-tRNA(Thr) + AMP + diphosphate + H(+). Functionally, catalyzes the attachment of threonine to tRNA(Thr) in a two-step reaction: L-threonine is first activated by ATP to form Thr-AMP and then transferred to the acceptor end of tRNA(Thr). Also edits incorrectly charged L-seryl-tRNA(Thr). This Desulforapulum autotrophicum (strain ATCC 43914 / DSM 3382 / VKM B-1955 / HRM2) (Desulfobacterium autotrophicum) protein is Threonine--tRNA ligase.